The chain runs to 203 residues: E3 ubiquitin-protein ligase rnf152-A (203 aa).

The RING-type; degenerate zinc finger occupies 12–55 (CQICFNYYSPRRRPKLLDCKRTCCSVCLQQMRACQKDLRCPWCR). A helical transmembrane segment spans residues 167–187 (SGICTVILVACVLVFLLGIVL).

The protein belongs to the RNF152 family.

It is found in the lysosome membrane. The enzyme catalyses S-ubiquitinyl-[E2 ubiquitin-conjugating enzyme]-L-cysteine + [acceptor protein]-L-lysine = [E2 ubiquitin-conjugating enzyme]-L-cysteine + N(6)-ubiquitinyl-[acceptor protein]-L-lysine.. It functions in the pathway protein modification; protein ubiquitination. In terms of biological role, E3 ubiquitin-protein ligase that acts as a negative regulator of mTORC1 signaling by mediating ubiquitination of RagA/RRAGA and RHEB. Catalyzes 'Lys-63'-linked polyubiquitination of RagA/RRAGA in response to amino acid starvation, thereby regulating mTORC1 signaling. Also mediates monoubiquitination of RHEB, promoting its association with the TSC-TBC complex and subsequent inhibition. Also mediates 'Lys-48'-linked polyubiquitination of target proteins and their subsequent targeting to the proteasome for degradation. In Xenopus laevis (African clawed frog), this protein is E3 ubiquitin-protein ligase rnf152-A.